A 275-amino-acid chain; its full sequence is MTKESPIPVVVNGAAGKMGKEVIKAVSQAEDMMLVGAVDLNPKYRGEDAGEVAGCGPVEVPILDDLQSVLVLATQEKVQGVMVDFTHPDGVYDNIRSAIAYGVRPVVGTTGLSGEQIKDLGEFAEKASTGCLIVPNFSIGMILLQQAAVQASQYFDHVEIIELHHNQKADAPSGTAIKTAEMLSELGKSFNPAKVEETETIRGSRGGITEENIHIHSVRLPGFIAHQEVIFGSTGQIYTLRHDTTDRSSFMPGVLLAIRKVTQLKSLIYGLEKIL.

NAD(+) contacts are provided by residues 13 to 18 (GAAGKM), 108 to 110 (GTT), and 134 to 137 (VPNF). His164 (proton donor/acceptor) is an active-site residue. His165 contributes to the (S)-2,3,4,5-tetrahydrodipicolinate binding site. Lys168 serves as the catalytic Proton donor. A (S)-2,3,4,5-tetrahydrodipicolinate-binding site is contributed by 174-175 (GT).

This sequence belongs to the DapB family.

It localises to the cytoplasm. It carries out the reaction (S)-2,3,4,5-tetrahydrodipicolinate + NAD(+) + H2O = (2S,4S)-4-hydroxy-2,3,4,5-tetrahydrodipicolinate + NADH + H(+). The enzyme catalyses (S)-2,3,4,5-tetrahydrodipicolinate + NADP(+) + H2O = (2S,4S)-4-hydroxy-2,3,4,5-tetrahydrodipicolinate + NADPH + H(+). Its pathway is amino-acid biosynthesis; L-lysine biosynthesis via DAP pathway; (S)-tetrahydrodipicolinate from L-aspartate: step 4/4. Catalyzes the conversion of 4-hydroxy-tetrahydrodipicolinate (HTPA) to tetrahydrodipicolinate. This Gloeothece citriformis (strain PCC 7424) (Cyanothece sp. (strain PCC 7424)) protein is 4-hydroxy-tetrahydrodipicolinate reductase.